A 331-amino-acid chain; its full sequence is Cathepsin S (331 aa).

An N-terminal signal peptide occupies residues 1 to 16 (MNWLVWALLLCSSAMA). Positions 17–114 (HVHRDPTLDH…VTYKSDPNQK (98 aa)) are cleaved as a propeptide — activation peptide. Asn-104 carries an N-linked (GlcNAc...) asparagine glycan. Cystine bridges form between Cys-126–Cys-224, Cys-136–Cys-180, Cys-170–Cys-213, and Cys-272–Cys-320. Cys-139 is an active-site residue. Catalysis depends on residues His-278 and Asn-298.

It belongs to the peptidase C1 family. As to quaternary structure, monomer.

It localises to the lysosome. The protein localises to the secreted. The protein resides in the cytoplasmic vesicle. Its subcellular location is the phagosome. It carries out the reaction Similar to cathepsin L, but with much less activity on Z-Phe-Arg-|-NHMec, and more activity on the Z-Val-Val-Arg-|-Xaa compound.. Its function is as follows. Thiol protease. Key protease responsible for the removal of the invariant chain from MHC class II molecules and MHC class II antigen presentation. The bond-specificity of this proteinase is in part similar to the specificities of cathepsin L. The protein is Cathepsin S (CTSS) of Bos taurus (Bovine).